The sequence spans 233 residues: Probable transglycosylase IsaA (233 aa).

The N-terminal stretch at 1–29 (MKKTIMASSLAVALGVTGYAAGTGHQAHA) is a signal peptide.

Belongs to the transglycosylase family. IsaA subfamily.

Its subcellular location is the secreted. Is able to cleave peptidoglycan. The chain is Probable transglycosylase IsaA (isaA) from Staphylococcus aureus (strain Mu3 / ATCC 700698).